The chain runs to 217 residues: tRNA (guanine-N(7)-)-methyltransferase (217 aa).

Positions 44, 69, 96, and 118 each coordinate S-adenosyl-L-methionine. Asp-118 is a catalytic residue. Substrate-binding positions include Lys-122, Asp-154, and 191–194 (TEYE).

Belongs to the class I-like SAM-binding methyltransferase superfamily. TrmB family.

It catalyses the reaction guanosine(46) in tRNA + S-adenosyl-L-methionine = N(7)-methylguanosine(46) in tRNA + S-adenosyl-L-homocysteine. The protein operates within tRNA modification; N(7)-methylguanine-tRNA biosynthesis. Functionally, catalyzes the formation of N(7)-methylguanine at position 46 (m7G46) in tRNA. This chain is tRNA (guanine-N(7)-)-methyltransferase, found in Bacillus thuringiensis (strain Al Hakam).